Here is a 181-residue protein sequence, read N- to C-terminus: Oligoribonuclease (181 aa).

The Exonuclease domain maps to 8–171 (LIWIDLEMTG…DDIRESVAEL (164 aa)). Tyr129 is an active-site residue.

The protein belongs to the oligoribonuclease family.

It localises to the cytoplasm. In terms of biological role, 3'-to-5' exoribonuclease specific for small oligoribonucleotides. The polypeptide is Oligoribonuclease (Sodalis glossinidius (strain morsitans)).